We begin with the raw amino-acid sequence, 900 residues long: Alpha-actinin-3 (900 aa).

Position 1 is an N-acetylmethionine (methionine 1). Residues 1-26 are disordered; sequence MMMVMQPEGLGAGEGPFSGGGGGEYM. Residues 1-260 form an actin-binding region; sequence MMMVMQPEGL…IMTYVSCFYH (260 aa). The segment covering 10–24 has biased composition (gly residues); the sequence is LGAGEGPFSGGGGGE. Calponin-homology (CH) domains follow at residues 44 to 148 and 157 to 263; these read KQQR…LRFA and TSAK…HAFA. 4 Spectrin repeats span residues 287–397, 407–512, 522–633, and 643–746; these read KLME…WLLS, HLAE…ALER, QLQL…TLQE, and RLRR…EVEN. 2 consecutive EF-hand domains span residues 759–794 and 795–830; these read EQLN…MGYD and LGEV…ETAE. The Ca(2+) site is built by aspartate 772, asparagine 776, methionine 778, aspartate 783, aspartate 808, and asparagine 810.

It belongs to the alpha-actinin family. As to quaternary structure, homodimer; antiparallel. Also forms heterodimers with ACTN2. Interacts with MYOZ1. In terms of tissue distribution, expression restricted to skeletal muscle fast (type 2) fibers (at protein level).

In terms of biological role, F-actin cross-linking protein which is thought to anchor actin to a variety of intracellular structures. This is a bundling protein. The protein is Alpha-actinin-3 (Actn3) of Mus musculus (Mouse).